Reading from the N-terminus, the 357-residue chain is Holliday junction branch migration complex subunit RuvB (357 aa).

Positions 1–10 (MAIQSDSLSS) are enriched in polar residues. The tract at residues 1 to 30 (MAIQSDSLSSRPDAPRLVAPAPASPNEESI) is disordered. The tract at residues 5–195 (SDSLSSRPDA…FGIVSRLEFY (191 aa)) is large ATPase domain (RuvB-L). ATP-binding positions include Leu-34, Arg-35, Gly-76, Lys-79, Thr-80, Thr-81, 142–144 (EDF), Arg-185, Tyr-195, and Arg-232. Residue Thr-80 coordinates Mg(2+). Residues 196–266 (NTDDLAHIVT…AANQALAMLE (71 aa)) form a small ATPAse domain (RuvB-S) region. Positions 269 to 357 (PQGLDLMDRK…QPSSGDLFGA (89 aa)) are head domain (RuvB-H). Residues Arg-305, Arg-324, and Arg-329 each contribute to the DNA site.

Belongs to the RuvB family. In terms of assembly, homohexamer. Forms an RuvA(8)-RuvB(12)-Holliday junction (HJ) complex. HJ DNA is sandwiched between 2 RuvA tetramers; dsDNA enters through RuvA and exits via RuvB. An RuvB hexamer assembles on each DNA strand where it exits the tetramer. Each RuvB hexamer is contacted by two RuvA subunits (via domain III) on 2 adjacent RuvB subunits; this complex drives branch migration. In the full resolvosome a probable DNA-RuvA(4)-RuvB(12)-RuvC(2) complex forms which resolves the HJ.

It is found in the cytoplasm. The catalysed reaction is ATP + H2O = ADP + phosphate + H(+). Its function is as follows. The RuvA-RuvB-RuvC complex processes Holliday junction (HJ) DNA during genetic recombination and DNA repair, while the RuvA-RuvB complex plays an important role in the rescue of blocked DNA replication forks via replication fork reversal (RFR). RuvA specifically binds to HJ cruciform DNA, conferring on it an open structure. The RuvB hexamer acts as an ATP-dependent pump, pulling dsDNA into and through the RuvAB complex. RuvB forms 2 homohexamers on either side of HJ DNA bound by 1 or 2 RuvA tetramers; 4 subunits per hexamer contact DNA at a time. Coordinated motions by a converter formed by DNA-disengaged RuvB subunits stimulates ATP hydrolysis and nucleotide exchange. Immobilization of the converter enables RuvB to convert the ATP-contained energy into a lever motion, pulling 2 nucleotides of DNA out of the RuvA tetramer per ATP hydrolyzed, thus driving DNA branch migration. The RuvB motors rotate together with the DNA substrate, which together with the progressing nucleotide cycle form the mechanistic basis for DNA recombination by continuous HJ branch migration. Branch migration allows RuvC to scan DNA until it finds its consensus sequence, where it cleaves and resolves cruciform DNA. This is Holliday junction branch migration complex subunit RuvB from Bordetella avium (strain 197N).